We begin with the raw amino-acid sequence, 235 residues long: Glycerol-3-phosphate acyltransferase (235 aa).

Transmembrane regions (helical) follow at residues 4–24, 56–76, 94–114, 122–142, 152–172, and 191–211; these read LLAILAVSYIIGSIPTSLVAG, VVTLIDIVKGVVAAVSVVAFF, LLAGMSAVIGHVFTLFAGFKG, AGMLIGIAPVSMLMVVGIFLL, VASMLAAIAFPLIIAIRKYIF, and FHDSLDYHLMIFGLIVALAIL.

Belongs to the PlsY family. Probably interacts with PlsX.

It is found in the cell inner membrane. The enzyme catalyses an acyl phosphate + sn-glycerol 3-phosphate = a 1-acyl-sn-glycero-3-phosphate + phosphate. It functions in the pathway lipid metabolism; phospholipid metabolism. Its function is as follows. Catalyzes the transfer of an acyl group from acyl-phosphate (acyl-PO(4)) to glycerol-3-phosphate (G3P) to form lysophosphatidic acid (LPA). This enzyme utilizes acyl-phosphate as fatty acyl donor, but not acyl-CoA or acyl-ACP. The protein is Glycerol-3-phosphate acyltransferase of Pelodictyon phaeoclathratiforme (strain DSM 5477 / BU-1).